The following is a 185-amino-acid chain: Elongation factor P (185 aa).

Belongs to the elongation factor P family.

The protein resides in the cytoplasm. It participates in protein biosynthesis; polypeptide chain elongation. Functionally, involved in peptide bond synthesis. Stimulates efficient translation and peptide-bond synthesis on native or reconstituted 70S ribosomes in vitro. Probably functions indirectly by altering the affinity of the ribosome for aminoacyl-tRNA, thus increasing their reactivity as acceptors for peptidyl transferase. The chain is Elongation factor P from Synechococcus sp. (strain JA-2-3B'a(2-13)) (Cyanobacteria bacterium Yellowstone B-Prime).